The following is a 466-amino-acid chain: Ribulose bisphosphate carboxylase large chain (466 aa).

At Lys-5 the chain carries N6,N6,N6-trimethyllysine. Residues Asn-114 and Thr-164 each coordinate substrate. Residue Lys-166 is the Proton acceptor of the active site. Residue Lys-168 coordinates substrate. Lys-192, Asp-194, and Glu-195 together coordinate Mg(2+). The residue at position 192 (Lys-192) is an N6-carboxylysine. His-285 (proton acceptor) is an active-site residue. Substrate contacts are provided by Arg-286, His-318, and Ser-370.

Belongs to the RuBisCO large chain family. Type I subfamily. Heterohexadecamer of 8 large chains and 8 small chains. Mg(2+) is required as a cofactor.

The protein resides in the plastid. The protein localises to the chloroplast. The enzyme catalyses 2 (2R)-3-phosphoglycerate + 2 H(+) = D-ribulose 1,5-bisphosphate + CO2 + H2O. It catalyses the reaction D-ribulose 1,5-bisphosphate + O2 = 2-phosphoglycolate + (2R)-3-phosphoglycerate + 2 H(+). Functionally, ruBisCO catalyzes two reactions: the carboxylation of D-ribulose 1,5-bisphosphate, the primary event in carbon dioxide fixation, as well as the oxidative fragmentation of the pentose substrate in the photorespiration process. Both reactions occur simultaneously and in competition at the same active site. The polypeptide is Ribulose bisphosphate carboxylase large chain (Drosera regia (King sundew)).